We begin with the raw amino-acid sequence, 639 residues long: tRNA-dihydrouridine(47) synthase [NAD(P)(+)]-like (639 aa).

2 stretches are compositionally biased toward polar residues: residues 1 to 19 (MAESDGSNNENGNLDTVTQ) and 54 to 65 (QTCSELSGNDAE). Disordered stretches follow at residues 1 to 20 (MAESDGSNNENGNLDTVTQK) and 52 to 122 (DKQT…HSQF). A compositionally biased stretch (basic and acidic residues) spans 66–85 (NTVRAEDAAEPEAKRIKLDD). Basic residues predominate over residues 103–119 (EKKRARGQNKSRPHMKH). 2 consecutive C3H1-type zinc fingers follow at residues 122 to 152 (FEENKLCPSVTQECASKCFFGDKCKFLHDVA) and 160 to 190 (EDIRPNCYLYETFGKCIYGVTCRFAKSHLGD). FMN-binding positions include 300–302 (PLT) and Q354. C385 functions as the Proton donor in the catalytic mechanism. Residues K424, H454, 486 to 488 (NGD), and 509 to 510 (AR) each bind FMN.

It belongs to the Dus family. Dus3 subfamily. Requires FMN as cofactor.

The enzyme catalyses 5,6-dihydrouridine(47) in tRNA + NAD(+) = uridine(47) in tRNA + NADH + H(+). The catalysed reaction is 5,6-dihydrouridine(47) in tRNA + NADP(+) = uridine(47) in tRNA + NADPH + H(+). It carries out the reaction a 5,6-dihydrouridine in mRNA + NAD(+) = a uridine in mRNA + NADH + H(+). It catalyses the reaction a 5,6-dihydrouridine in mRNA + NADP(+) = a uridine in mRNA + NADPH + H(+). Functionally, catalyzes the synthesis of dihydrouridine, a modified base, in various RNAs, such as tRNAs, mRNAs and some long non-coding RNAs (lncRNAs). Mainly modifies the uridine in position 47 (U47) in the D-loop of most cytoplasmic tRNAs. Also able to mediate the formation of dihydrouridine in some mRNAs, thereby regulating their translation. The chain is tRNA-dihydrouridine(47) synthase [NAD(P)(+)]-like (dus3l) from Xenopus tropicalis (Western clawed frog).